The sequence spans 83 residues: UPF0729 protein CBG02799 (83 aa).

The segment at 51–83 (QEKKEEEEEKEKSCCSTEAENTTEVTTETKKDQ) is disordered. Over residues 67-76 (TEAENTTEVT) the composition is skewed to low complexity.

Belongs to the UPF0729 family.

The protein is UPF0729 protein CBG02799 of Caenorhabditis briggsae.